A 273-amino-acid chain; its full sequence is Dermonecrotic toxin LapSicTox-alphaIB1ai (273 aa).

Histidine 5 is a catalytic residue. Residues glutamate 25 and aspartate 27 each coordinate Mg(2+). The active-site Nucleophile is the histidine 41. Intrachain disulfides connect cysteine 45/cysteine 51 and cysteine 47/cysteine 190. Aspartate 85 lines the Mg(2+) pocket. Asparagine 250 carries N-linked (GlcNAc...) asparagine glycosylation.

Belongs to the arthropod phospholipase D family. Class II subfamily. It depends on Mg(2+) as a cofactor. Expressed by the venom gland.

The protein resides in the secreted. It catalyses the reaction an N-(acyl)-sphingosylphosphocholine = an N-(acyl)-sphingosyl-1,3-cyclic phosphate + choline. It carries out the reaction an N-(acyl)-sphingosylphosphoethanolamine = an N-(acyl)-sphingosyl-1,3-cyclic phosphate + ethanolamine. The enzyme catalyses a 1-acyl-sn-glycero-3-phosphocholine = a 1-acyl-sn-glycero-2,3-cyclic phosphate + choline. The catalysed reaction is a 1-acyl-sn-glycero-3-phosphoethanolamine = a 1-acyl-sn-glycero-2,3-cyclic phosphate + ethanolamine. Dermonecrotic toxins cleave the phosphodiester linkage between the phosphate and headgroup of certain phospholipids (sphingolipid and lysolipid substrates), forming an alcohol (often choline) and a cyclic phosphate. This toxin acts on sphingomyelin (SM). It may also act on ceramide phosphoethanolamine (CPE), lysophosphatidylcholine (LPC) and lysophosphatidylethanolamine (LPE), but not on lysophosphatidylserine (LPS), and lysophosphatidylglycerol (LPG). It acts by transphosphatidylation, releasing exclusively cyclic phosphate products as second products. Induces dermonecrosis, hemolysis, increased vascular permeability, edema, inflammatory response, and platelet aggregation. In Loxosceles apachea (Apache recluse spider), this protein is Dermonecrotic toxin LapSicTox-alphaIB1ai.